The chain runs to 378 residues: 2-aminoethylphosphonate--pyruvate transaminase 1 (378 aa).

N6-(pyridoxal phosphate)lysine is present on K194.

The protein belongs to the class-V pyridoxal-phosphate-dependent aminotransferase family. PhnW subfamily. As to quaternary structure, homodimer. The cofactor is pyridoxal 5'-phosphate.

The catalysed reaction is (2-aminoethyl)phosphonate + pyruvate = phosphonoacetaldehyde + L-alanine. Its function is as follows. Involved in phosphonate degradation. The polypeptide is 2-aminoethylphosphonate--pyruvate transaminase 1 (Cupriavidus pinatubonensis (strain JMP 134 / LMG 1197) (Cupriavidus necator (strain JMP 134))).